The primary structure comprises 505 residues: MEELQGYLEIDGFRQHHFLYPLLLQEYIYALAHDHGLNGSILSEPMENLSHDNKSSSLIVKRLITRMHQQNHFIISVNDSNQKGFVGHNKNFHSQKISEGFAVIVEIPFSLQLVSSLEEKEIAKFHNSRSIHSIFPFFEDKLSHLNHVSDILIPYPIHLEILVQTLRCWIQDAPSLHLLRFFLHEYWNSNSLITPKKSISFFSKENQRLFLFLYNSHVYECESVFIFLRKQSSHLRSTSFGSFLERTHFYGKIEHLVVVLGNDFPKTLWLFKDPFVHYVRYQGKSILASRGTQFLIKKWKYHLVNFWQCHFYLWSQPDRIHLNQLCNHSFYFLGYLSSVQLNSSVVRSQMLENAFLMDTAIKKFETIVPIIPLIGSLAKAKFCNGSGHPISKPFRTDLSDSEILNRFGRICKNLSHYHSGSSKKQSLYRIKFILRLSCARTLSRKHKSTVRAFLKRLGSELLEEFLTEEEQVLSLIFPRTPSHRPHRERIWYLDIICINDLANHE.

Belongs to the intron maturase 2 family. MatK subfamily.

Its subcellular location is the plastid. It localises to the chloroplast. In terms of biological role, usually encoded in the trnK tRNA gene intron. Probably assists in splicing its own and other chloroplast group II introns. This Calycanthus occidentalis (Spice bush) protein is Maturase K.